The chain runs to 520 residues: Bifunctional purine biosynthesis protein PurH (520 aa).

Residues 1–150 (MSDDRKAIKR…KNHPSVAVVV (150 aa)) enclose the MGS-like domain.

This sequence belongs to the PurH family.

The enzyme catalyses (6R)-10-formyltetrahydrofolate + 5-amino-1-(5-phospho-beta-D-ribosyl)imidazole-4-carboxamide = 5-formamido-1-(5-phospho-D-ribosyl)imidazole-4-carboxamide + (6S)-5,6,7,8-tetrahydrofolate. It catalyses the reaction IMP + H2O = 5-formamido-1-(5-phospho-D-ribosyl)imidazole-4-carboxamide. Its pathway is purine metabolism; IMP biosynthesis via de novo pathway; 5-formamido-1-(5-phospho-D-ribosyl)imidazole-4-carboxamide from 5-amino-1-(5-phospho-D-ribosyl)imidazole-4-carboxamide (10-formyl THF route): step 1/1. It functions in the pathway purine metabolism; IMP biosynthesis via de novo pathway; IMP from 5-formamido-1-(5-phospho-D-ribosyl)imidazole-4-carboxamide: step 1/1. The sequence is that of Bifunctional purine biosynthesis protein PurH from Corynebacterium glutamicum (strain R).